Reading from the N-terminus, the 506-residue chain is Protein nucleotidyltransferase YdiU (506 aa).

ATP-binding residues include Gly95, Gly97, Arg98, Lys118, Asp130, Gly131, Arg181, and Arg188. The Proton acceptor role is filled by Asp257. Asn258 and Asp267 together coordinate Mg(2+). ATP is bound at residue Asp267. Residues 487 to 506 (KHYQDAPTPDQRVKQTFCGT) are disordered.

Belongs to the SELO family. Mg(2+) is required as a cofactor. Requires Mn(2+) as cofactor.

The enzyme catalyses L-seryl-[protein] + ATP = 3-O-(5'-adenylyl)-L-seryl-[protein] + diphosphate. It catalyses the reaction L-threonyl-[protein] + ATP = 3-O-(5'-adenylyl)-L-threonyl-[protein] + diphosphate. The catalysed reaction is L-tyrosyl-[protein] + ATP = O-(5'-adenylyl)-L-tyrosyl-[protein] + diphosphate. It carries out the reaction L-histidyl-[protein] + UTP = N(tele)-(5'-uridylyl)-L-histidyl-[protein] + diphosphate. The enzyme catalyses L-seryl-[protein] + UTP = O-(5'-uridylyl)-L-seryl-[protein] + diphosphate. It catalyses the reaction L-tyrosyl-[protein] + UTP = O-(5'-uridylyl)-L-tyrosyl-[protein] + diphosphate. Its function is as follows. Nucleotidyltransferase involved in the post-translational modification of proteins. It can catalyze the addition of adenosine monophosphate (AMP) or uridine monophosphate (UMP) to a protein, resulting in modifications known as AMPylation and UMPylation. The protein is Protein nucleotidyltransferase YdiU of Shewanella denitrificans (strain OS217 / ATCC BAA-1090 / DSM 15013).